The primary structure comprises 485 residues: MDLLATTSAAAVSSYALLSTIYKSVQALYAQPAINSSLDNLGQAEVVVPAVDVIVPCFNENPNTLAECLESIASQDYAGKMQVYVVDDGSANRDVVAPVHRIYASDPRFSFILLANNVGKRKAQIAAIRSSSGDLVLNVDSDTILAADVVTKLVLKMHDPGIGAAMGQLIASNRNQTWLTRLIDMEYWLACNEERAAQARFGAVMCCCGPCAMYRRSALALLLDQYEAQFFRGKPSDFGEDRHLTILMLKAGFRTEYVPDAIAATVVPHSLRPYLRQQLRWARSTFRDTFLAWRLLPELDGYLTLDVIGQNLGPLLLAISSLAALAQLLIDGSIPWWTGLTIAAMTTVRCCVAALRARELRFIGFSLHTPINICLLLPLKAYALCTLSNSDWLSRKVTDMPTEEGKQPVILHPNAGRSPAGVGGRLLLFVRRRYRSLHRAWRRRRVFPVAIVRLSTNKWSADDSGRKPSVIRARVGCRRPVAPRH.

This sequence belongs to the NodC/HAS family.

It is found in the cell membrane. In terms of biological role, may be involved in the synthesis of NodRm-1, a sulfated N-acyl-beta-1,4-tetrasaccharide of N-acetylglucosamine which initiates a series of events in the host plant species leading eventually to nodulation. This chain is N-acetylglucosaminyltransferase (nodC), found in Bradyrhizobium diazoefficiens (strain JCM 10833 / BCRC 13528 / IAM 13628 / NBRC 14792 / USDA 110).